The chain runs to 280 residues: Golgi to ER traffic protein 2 (280 aa).

3 stretches are compositionally biased toward basic and acidic residues: residues 1–17 (MSLS…ERRQ), 44–62 (SALD…EAVK), and 71–80 (AKKESTAQAK). Residues 1–80 (MSLSEAEKRK…AKKESTAQAK (80 aa)) are disordered. Residues 1-146 (MSLSEAEKRK…VEYHKYRVNT (146 aa)) are Cytoplasmic-facing. Residues 147 to 166 (LTAKTTLVKWIVLLAYIFLL) form a helical membrane-spanning segment. At 167–191 (TRTDDTYFPFVVRSYLPEVFTSQSS) the chain is on the lumenal side. The helical transmembrane segment at 192–211 (FFSIFLTFEILATSIYYQLS) threads the bilayer. Topologically, residues 212-258 (VGVERETGVKTLQDTSKIVSLVSMVPEGILPIADLRGKVILAMKYWN) are cytoplasmic. A helical membrane pass occupies residues 259-279 (IIAMMIGDVCFVLVAIGLVSQ). I280 is a topological domain (lumenal).

Belongs to the GET2 family. Component of the Golgi to ER traffic (GET) complex, which is composed of GET1, GET2 and GET3. Within the complex, GET1 and GET2 form a heterotetramer which is stabilized by phosphatidylinositol binding and which binds to the GET3 homodimer.

Its subcellular location is the endoplasmic reticulum membrane. The protein resides in the golgi apparatus membrane. Its function is as follows. Required for the post-translational delivery of tail-anchored (TA) proteins to the endoplasmic reticulum. Together with GET1, acts as a membrane receptor for soluble GET3, which recognizes and selectively binds the transmembrane domain of TA proteins in the cytosol. The GET complex cooperates with the HDEL receptor ERD2 to mediate the ATP-dependent retrieval of resident ER proteins that contain a C-terminal H-D-E-L retention signal from the Golgi to the ER. The polypeptide is Golgi to ER traffic protein 2 (Candida glabrata (strain ATCC 2001 / BCRC 20586 / JCM 3761 / NBRC 0622 / NRRL Y-65 / CBS 138) (Yeast)).